The sequence spans 297 residues: 4-hydroxy-tetrahydrodipicolinate synthase (297 aa).

A pyruvate-binding site is contributed by Thr49. Residue Tyr137 is the Proton donor/acceptor of the active site. The active-site Schiff-base intermediate with substrate is the Lys166. Ile208 contributes to the pyruvate binding site.

Belongs to the DapA family. In terms of assembly, homotetramer; dimer of dimers.

The protein resides in the cytoplasm. It carries out the reaction L-aspartate 4-semialdehyde + pyruvate = (2S,4S)-4-hydroxy-2,3,4,5-tetrahydrodipicolinate + H2O + H(+). It participates in amino-acid biosynthesis; L-lysine biosynthesis via DAP pathway; (S)-tetrahydrodipicolinate from L-aspartate: step 3/4. Its function is as follows. Catalyzes the condensation of (S)-aspartate-beta-semialdehyde [(S)-ASA] and pyruvate to 4-hydroxy-tetrahydrodipicolinate (HTPA). The sequence is that of 4-hydroxy-tetrahydrodipicolinate synthase from Porphyromonas gingivalis (strain ATCC 33277 / DSM 20709 / CIP 103683 / JCM 12257 / NCTC 11834 / 2561).